The sequence spans 177 residues: Tumor necrosis factor ligand superfamily member 18 (177 aa).

Over 1 to 27 (MCLSHLENMPLSHSRTQGAQRSSWKLW) the chain is Cytoplasmic. A helical; Signal-anchor for type II membrane protein membrane pass occupies residues 28-48 (LFCSIVMLLFLCSFSWLIFIF). Residues 47 to 170 (IFLQLETAKE…NNTYWGIILL (124 aa)) enclose the THD domain. Over 49–177 (LQLETAKEPC…ILLANPQFIS (129 aa)) the chain is Extracellular. Cysteines 58 and 78 form a disulfide. 2 N-linked (GlcNAc...) asparagine glycosylation sites follow: asparagine 129 and asparagine 161.

The protein belongs to the tumor necrosis factor family. Homodimer. Homotrimer. Expressed at high levels in the small intestine, ovary, testis, kidney and endothelial cells.

It localises to the cell membrane. Functionally, cytokine that binds to TNFRSF18/AITR/GITR. Regulates T-cell responses. Can function as costimulator and lower the threshold for T-cell activation and T-cell proliferation. Important for interactions between activated T-lymphocytes and endothelial cells. Mediates activation of NF-kappa-B. Triggers increased phosphorylation of STAT1 and up-regulates expression of VCAM1 and ICAM1. Promotes leukocyte adhesion to endothelial cells. Regulates migration of monocytes from the splenic reservoir to sites of inflammation. This is Tumor necrosis factor ligand superfamily member 18 from Homo sapiens (Human).